Consider the following 922-residue polypeptide: Metabotropic glutamate receptor 7 (922 aa).

An N-terminal signal peptide occupies residues 1–34 (MVQLRKLLRVLTLMKFPCCVLEVLLCALAAAARG). Topologically, residues 35 to 590 (QEMYAPHSIR…IIKLEWHSPW (556 aa)) are extracellular. Cys-67 and Cys-109 are disulfide-bonded. N-linked (GlcNAc...) asparagine glycosylation is present at Asn-98. L-glutamate contacts are provided by residues Ser-159, 180–182 (AST), Tyr-230, and Asp-314. 7 cysteine pairs are disulfide-bonded: Cys-249–Cys-541, Cys-374–Cys-390, Cys-430–Cys-437, Cys-523–Cys-542, Cys-527–Cys-545, Cys-548–Cys-560, and Cys-563–Cys-576. Residue Lys-407 coordinates L-glutamate. Residues Asn-458 and Asn-486 are each glycosylated (N-linked (GlcNAc...) asparagine). N-linked (GlcNAc...) asparagine glycosylation occurs at Asn-572. A helical transmembrane segment spans residues 591-615 (AVIPVFLAMLGIIATIFVMATFIRY). At 616 to 627 (NDTPIVRASGRE) the chain is on the cytoplasmic side. The chain crosses the membrane as a helical span at residues 628–648 (LSYVLLTGIFLCYIITFLMIA). At 649-654 (KPDVAV) the chain is on the extracellular side. The helical transmembrane segment at 655–675 (CSFRRVFLGLGMCISYAALLT) threads the bilayer. Over 676–702 (KTNRIYRIFEQGKKSVTAPRLISPTSQ) the chain is Cytoplasmic. The chain crosses the membrane as a helical span at residues 703-723 (LAITSSLISVQLLGVFIWFGV). The Extracellular segment spans residues 724 to 753 (DPPNIIIDYDEHKTMNPEQARGVLKCDITD). A helical membrane pass occupies residues 754–775 (LQIICSLGYSILLMVTCTVYAI). At 776–788 (KTRGVPENFNEAK) the chain is on the cytoplasmic side. A helical membrane pass occupies residues 789 to 810 (PIGFTMYTTCIVWLAFIPIFFG). The Extracellular portion of the chain corresponds to 811-825 (TAQSAEKLYIQTTTL). A helical transmembrane segment spans residues 826-850 (TISMNLSASVALGMLYMPKVYIIIF). The Cytoplasmic portion of the chain corresponds to 851-922 (HPELNVQKRK…VTWYTIPPTV (72 aa)).

It belongs to the G-protein coupled receptor 3 family. In terms of assembly, homodimer. Interacts with PICK1.

It localises to the cell membrane. In terms of biological role, G-protein coupled receptor activated by glutamate that regulates axon outgrowth through the MAPK-cAMP-PKA signaling pathway during neuronal development. Ligand binding causes a conformation change that triggers signaling via guanine nucleotide-binding proteins (G proteins) and modulates the activity of downstream effectors, such as adenylate cyclase that it inhibits. The chain is Metabotropic glutamate receptor 7 (GRM7) from Pongo abelii (Sumatran orangutan).